Here is a 292-residue protein sequence, read N- to C-terminus: Protease HtpX (292 aa).

2 helical membrane passes run 5 to 25 (IFLFLLTNLAVLMLAGIVMSL) and 34 to 54 (SGLLVMAAIFGFGGSFISLLL). A Zn(2+)-binding site is contributed by His-140. Glu-141 is an active-site residue. A Zn(2+)-binding site is contributed by His-144. Transmembrane regions (helical) follow at residues 155-175 (LLQGVLNTFVIVLARVVGGII) and 193-213 (IIVFALEMVFGLFATMIAMWF). Glu-218 provides a ligand contact to Zn(2+).

This sequence belongs to the peptidase M48B family. Zn(2+) is required as a cofactor.

It is found in the cell inner membrane. This chain is Protease HtpX, found in Xanthomonas euvesicatoria pv. vesicatoria (strain 85-10) (Xanthomonas campestris pv. vesicatoria).